The primary structure comprises 40 residues: Proteinase inhibitor IIB (40 aa).

3 cysteine pairs are disulfide-bonded: Cys-2–Cys-16, Cys-6–Cys-28, and Cys-12–Cys-38.

This sequence belongs to the protease inhibitor I20 (potato type II proteinase inhibitor) family.

The protein localises to the secreted. Its function is as follows. Inhibits chymotrypsin and subtilisin strongly. This Solanum tuberosum (Potato) protein is Proteinase inhibitor IIB.